The primary structure comprises 581 residues: DEAD-box ATP-dependent RNA helicase 22 (581 aa).

The Q motif signature appears at 80 to 108; that stretch reads VSWKSLGLSDNVSIALRDSGFDRPSLTQA. The 270-residue stretch at 111-380 folds into the Helicase ATP-binding domain; the sequence is IPSILSGKDV…GGILKHMFQD (270 aa). An ATP-binding site is contributed by 124–131; it reads AETGSGKT. A DEAD box motif is present at residues 244–247; sequence DEAD. A Helicase C-terminal domain is found at 408–566; it reads QVDALIEAVK…GFRNKVKKRA (159 aa).

Belongs to the DEAD box helicase family.

The enzyme catalyses ATP + H2O = ADP + phosphate + H(+). The sequence is that of DEAD-box ATP-dependent RNA helicase 22 (RH22) from Arabidopsis thaliana (Mouse-ear cress).